The following is a 302-amino-acid chain: Aspartate carbamoyltransferase catalytic subunit (302 aa).

2 residues coordinate carbamoyl phosphate: R51 and T52. Residue K80 participates in L-aspartate binding. Positions 101, 129, and 132 each coordinate carbamoyl phosphate. L-aspartate is bound by residues R162 and R223. Carbamoyl phosphate-binding residues include L261 and P262.

Belongs to the aspartate/ornithine carbamoyltransferase superfamily. ATCase family. As to quaternary structure, heterododecamer (2C3:3R2) of six catalytic PyrB chains organized as two trimers (C3), and six regulatory PyrI chains organized as three dimers (R2).

The catalysed reaction is carbamoyl phosphate + L-aspartate = N-carbamoyl-L-aspartate + phosphate + H(+). It functions in the pathway pyrimidine metabolism; UMP biosynthesis via de novo pathway; (S)-dihydroorotate from bicarbonate: step 2/3. In terms of biological role, catalyzes the condensation of carbamoyl phosphate and aspartate to form carbamoyl aspartate and inorganic phosphate, the committed step in the de novo pyrimidine nucleotide biosynthesis pathway. The chain is Aspartate carbamoyltransferase catalytic subunit from Chromobacterium violaceum (strain ATCC 12472 / DSM 30191 / JCM 1249 / CCUG 213 / NBRC 12614 / NCIMB 9131 / NCTC 9757 / MK).